The following is a 293-amino-acid chain: Exosome complex component RRP4 (293 aa).

In terms of domain architecture, S1 motif spans 79-159; that stretch reads EVGDIVVGRI…SDGAVSLHTR (81 aa). Serine 124 is subject to Phosphoserine.

This sequence belongs to the RRP4 family. In terms of assembly, component of the RNA exosome core complex (Exo-9), composed of EXOSC1, EXOSC2, EXOSC3, EXOSC4, EXOSC5, EXOSC6, EXOSC7, EXOSC8 and EXOSC9; within the complex interacts with EXOSC4 and EXOSC7. The catalytically inactive RNA exosome core complex (Exo-9) associates with the catalytic subunit EXOSC10/RRP6. Exo-9 may associate with DIS3 to form the nucleolar exosome complex, or DIS3L to form the cytoplasmic exosome complex. Exo-9 is formed by a hexameric base ring consisting of the heterodimers EXOSC4-EXOSC9, EXOSC5-EXOSC8 and EXOSC6-EXOSC7, and a cap ring consisting of EXOSC1, EXOSC2 and EXOSC3. The RNA exosome complex associates with cofactors C1D/RRP47, MPHOSPH6/MPP6 and MTREX/MTR4. Interacts with GTPBP1. Interacts with ZFP36L1 (via N-terminus).

It is found in the cytoplasm. The protein resides in the nucleus. Its subcellular location is the nucleolus. Its function is as follows. Non-catalytic component of the RNA exosome complex which has 3'-&gt;5' exoribonuclease activity and participates in a multitude of cellular RNA processing and degradation events. In the nucleus, the RNA exosome complex is involved in proper maturation of stable RNA species such as rRNA, snRNA and snoRNA, in the elimination of RNA processing by-products and non-coding 'pervasive' transcripts, such as antisense RNA species and promoter-upstream transcripts (PROMPTs), and of mRNAs with processing defects, thereby limiting or excluding their export to the cytoplasm. The RNA exosome may be involved in Ig class switch recombination (CSR) and/or Ig variable region somatic hypermutation (SHM) by targeting AICDA deamination activity to transcribed dsDNA substrates. In the cytoplasm, the RNA exosome complex is involved in general mRNA turnover and specifically degrades inherently unstable mRNAs containing AU-rich elements (AREs) within their 3' untranslated regions, and in RNA surveillance pathways, preventing translation of aberrant mRNAs. It seems to be involved in degradation of histone mRNA. The catalytic inactive RNA exosome core complex of 9 subunits (Exo-9) is proposed to play a pivotal role in the binding and presentation of RNA for ribonucleolysis, and to serve as a scaffold for the association with catalytic subunits and accessory proteins or complexes. EXOSC2 as peripheral part of the Exo-9 complex stabilizes the hexameric ring of RNase PH-domain subunits through contacts with EXOSC4 and EXOSC7. The chain is Exosome complex component RRP4 from Homo sapiens (Human).